The following is a 348-amino-acid chain: Oxygen-dependent coproporphyrinogen-III oxidase (348 aa).

S104 provides a ligand contact to substrate. A divalent metal cation is bound by residues H108 and H118. H118 functions as the Proton donor in the catalytic mechanism. 120–122 (NYR) is a binding site for substrate. 2 residues coordinate a divalent metal cation: H152 and H182. Residues 272–307 (YAEFNLVWDRGTIFGLQTNGRTESILMSLPPLARWE) are important for dimerization.

This sequence belongs to the aerobic coproporphyrinogen-III oxidase family. As to quaternary structure, homodimer. It depends on a divalent metal cation as a cofactor.

It is found in the cytoplasm. The enzyme catalyses coproporphyrinogen III + O2 + 2 H(+) = protoporphyrinogen IX + 2 CO2 + 2 H2O. The protein operates within porphyrin-containing compound metabolism; protoporphyrin-IX biosynthesis; protoporphyrinogen-IX from coproporphyrinogen-III (O2 route): step 1/1. Involved in the heme and chlorophyll biosynthesis. Catalyzes the aerobic oxidative decarboxylation of propionate groups of rings A and B of coproporphyrinogen-III to yield the vinyl groups in protoporphyrinogen-IX. The protein is Oxygen-dependent coproporphyrinogen-III oxidase of Prochlorococcus marinus (strain NATL2A).